Here is a 220-residue protein sequence, read N- to C-terminus: Ribosomal RNA large subunit methyltransferase E (220 aa).

S-adenosyl-L-methionine contacts are provided by glycine 60, tryptophan 62, aspartate 92, aspartate 108, and aspartate 133. Catalysis depends on lysine 173, which acts as the Proton acceptor. The segment at 195–220 (APRKPKASRDKSSETFILGRHLKRPR) is disordered.

The protein belongs to the class I-like SAM-binding methyltransferase superfamily. RNA methyltransferase RlmE family.

It is found in the cytoplasm. The enzyme catalyses uridine(2552) in 23S rRNA + S-adenosyl-L-methionine = 2'-O-methyluridine(2552) in 23S rRNA + S-adenosyl-L-homocysteine + H(+). Its function is as follows. Specifically methylates the uridine in position 2552 of 23S rRNA at the 2'-O position of the ribose in the fully assembled 50S ribosomal subunit. This Burkholderia lata (strain ATCC 17760 / DSM 23089 / LMG 22485 / NCIMB 9086 / R18194 / 383) protein is Ribosomal RNA large subunit methyltransferase E.